The following is a 176-amino-acid chain: Inner membrane protein p54 (176 aa).

The chain crosses the membrane as a helical span at residues tyrosine 32–phenylalanine 52. The tract at residues valine 82–leucine 176 is disordered. Residues glycine 123–threonine 154 are compositionally biased toward low complexity. Positions tyrosine 142–threonine 154 are interaction with host DYNLL1.

It belongs to the asfivirus envelope protein p54 family. As to quaternary structure, interacts with the host light chain cytoplasmic dynein DYNLL1; this interaction is critical for intracellular microtubule-dependent virus transport toward viral factories.

The protein resides in the virion membrane. The protein localises to the host cytoplasm. Its subcellular location is the host cytoskeleton. It localises to the host endoplasmic reticulum membrane. In terms of biological role, inner envelope protein involved, through its interaction with host dynein, in the intracellular microtubule-dependent transport of viral capsid toward viral factories. Seems to induce caspase-3 activation and apoptosis. Plays a role in virion morphogenesis by recruiting and transforming the host ER membranes into the precursors of the viral envelope. Involved in virus attachment to the host cell. The protein is Inner membrane protein p54 of African swine fever virus (isolate Tick/Malawi/Lil 20-1/1983) (ASFV).